A 903-amino-acid chain; its full sequence is HTH-type transcriptional regulator MalT (903 aa).

39-46 (CPAGYGKT) is a binding site for ATP. The HTH luxR-type domain occupies 832-897 (ELIRTSPLTQ…DAVQQAQRLL (66 aa)). The H-T-H motif DNA-binding region spans 856 to 875 (NDQIAGELEVAATTIKTHIR).

This sequence belongs to the MalT family. As to quaternary structure, monomer in solution. Oligomerizes to an active state in the presence of the positive effectors ATP and maltotriose.

Activated by ATP and maltotriose, which are both required for DNA binding. Positively regulates the transcription of the maltose regulon whose gene products are responsible for uptake and catabolism of malto-oligosaccharides. Specifically binds to the promoter region of its target genes, recognizing a short DNA motif called the MalT box. This Yersinia enterocolitica serotype O:8 / biotype 1B (strain NCTC 13174 / 8081) protein is HTH-type transcriptional regulator MalT.